Reading from the N-terminus, the 669-residue chain is Collagen alpha-1(II) chain (669 aa).

4-hydroxyproline is present on residues Pro-3 and Pro-12. A compositionally biased stretch (low complexity) spans 318–327 (XXXXXXXGAP). 3 disordered regions span residues 318–360 (XXXX…XXXX), 405–438 (XXXX…XXXX), and 638–669 (XXGF…AGPR). A 4-hydroxyproline mark is found at Pro-336 and Pro-345. Composition is skewed to low complexity over residues 339-360 (AGFA…XXXX) and 405-420 (XXXX…NGNP). 3-hydroxyproline is present on Pro-413. Residues Pro-414, Pro-420, and Pro-426 each carry the 4-hydroxyproline modification. Low complexity-rich tracts occupy residues 429-438 (AGKXXXXXXX) and 638-647 (XXGFTGLQGL). Pro-648 carries the 4-hydroxyproline modification. At Pro-650 the chain carries 3-hydroxyproline.

It belongs to the fibrillar collagen family. As to quaternary structure, homotrimers of alpha 1(II) chains. Post-translationally, contains mostly 4-hydroxyproline. Prolines at the third position of the tripeptide repeating unit (G-X-P) are 4-hydroxylated in some or all of the chains. In terms of processing, contains 3-hydroxyproline at a few sites. This modification occurs on the first proline residue in the sequence motif Gly-Pro-Hyp, where Hyp is 4-hydroxyproline.

It is found in the secreted. It localises to the extracellular space. The protein resides in the extracellular matrix. In terms of biological role, type II collagen is specific for cartilaginous tissues. It is essential for the normal embryonic development of the skeleton, for linear growth and for the ability of cartilage to resist compressive forces. This chain is Collagen alpha-1(II) chain, found in Mammut americanum (American mastodon).